A 159-amino-acid polypeptide reads, in one-letter code: UPF0262 protein PHZ_c2197 (159 aa).

This sequence belongs to the UPF0262 family.

This Phenylobacterium zucineum (strain HLK1) protein is UPF0262 protein PHZ_c2197.